The sequence spans 157 residues: NADPH-dependent 7-cyano-7-deazaguanine reductase (157 aa).

The Thioimide intermediate role is filled by C55. Residue D62 is the Proton donor of the active site. Residues 77–79 and 96–97 each bind substrate; these read VES and HE.

This sequence belongs to the GTP cyclohydrolase I family. QueF type 1 subfamily.

It localises to the cytoplasm. The catalysed reaction is 7-aminomethyl-7-carbaguanine + 2 NADP(+) = 7-cyano-7-deazaguanine + 2 NADPH + 3 H(+). It functions in the pathway tRNA modification; tRNA-queuosine biosynthesis. Functionally, catalyzes the NADPH-dependent reduction of 7-cyano-7-deazaguanine (preQ0) to 7-aminomethyl-7-deazaguanine (preQ1). The polypeptide is NADPH-dependent 7-cyano-7-deazaguanine reductase (Neisseria meningitidis serogroup C / serotype 2a (strain ATCC 700532 / DSM 15464 / FAM18)).